The following is a 68-amino-acid chain: Protein transport protein Sec61 subunit gamma (68 aa).

The Cytoplasmic segment spans residues 1-32 (MDQVMAWVEPGKQFAKDSIRLVKRCTKPDRKE). Residues 33–61 (FQKIAVATAIGFAIMGFIGFFVKLIHIPI) form a helical membrane-spanning segment. Residues 62-68 (NNIIVGS) lie on the Extracellular side of the membrane.

This sequence belongs to the SecE/SEC61-gamma family. As to quaternary structure, heterotrimeric complex composed of SEC61-alpha, SEC61-beta and SEC61-gamma. Component of the ribosome-associated ER translocon complex.

It is found in the endoplasmic reticulum membrane. Its function is as follows. Necessary for protein translocation in the endoplasmic reticulum and multi-pass membrane protein biogenesis. The polypeptide is Protein transport protein Sec61 subunit gamma (SEC61G) (Ciona intestinalis (Transparent sea squirt)).